Reading from the N-terminus, the 500-residue chain is Cytochrome P450 monooxygenase 103 (500 aa).

The next 2 helical transmembrane spans lie at 1-21 and 26-46; these read MAST…YLLR and PLYA…IGAL. A glycan (N-linked (GlcNAc...) asparagine) is linked at Asn374. Heme is bound at residue Cys441.

This sequence belongs to the cytochrome P450 family. Heme is required as a cofactor.

The protein resides in the membrane. It functions in the pathway secondary metabolite biosynthesis. In terms of biological role, cytochrome P450 monooxygenase that is able to use testosterone as a substrate for oxidation. This Postia placenta (strain ATCC 44394 / Madison 698-R) (Brown rot fungus) protein is Cytochrome P450 monooxygenase 103.